Reading from the N-terminus, the 966-residue chain is MPESLIAGIPVHFPFEPYPVQRAYMEKVIHCLRDGTNGVLESPTGTGKTLSLLCSSLAWIRTRQSEHQMQMVKMEKADFSGIGGGAPGGDLSELAKTMGRANNWGVPKVIYASRTHSQLTQAMRELKRTAYANMRSVVLGSRDQLCIHPEVMRELGNSNKTNMCKLRVHSKTCSFQMRVESRKDHPDLRGPTIMDIEDLVKVGQRLKICPYFASRELARANKIELGNTIVILDEAHNIEKICEEYASVQIKSSDVAMTIEDITHIRQVFASGESQDMAGDEPKDFTLDDLTLLKEMLLELEKAIDAVVVDNAVDGTTFPASMMYELLGKANFTYGNVASIISLLDKLVQYLLVASQQMSIRKGGTFTLLSDLLTIVFANKEDVMSKVYASFKVHVLVEESKQGHGKQQGAKQQGGWLGKGTIAAATGSSKVAKIINFWCFNPGFGMEQLLNTQVRSVILTSGTLAPLKPLIAELAIPVAQHLENPHIVDQSQVYVKIIGTGPDRQQLISNYANRDNPKYVSSLGQTILNVARIVPDGLLVFFPSYPMLNKCVDAWQASGLWADISCKKPIFLEPRSKDQFTSTMEEFYQAIRDSKGAVFMAVCRGKVSEGLDFADRNGRAVIITGLPFPPLKDPKVILKRRYLEANRTRENQLLSGQEWYNLDATRAVNQAIGRVIRHRNDYGAILLCDSRFKDASQVQQLSKWIRGHLGDRPQCSPFGPIVRELRQFFKNAEANMKLPDERETDSPLETVCKTEVEPLAAIPKVKREPGSNATFKSANESAIKVEMANSIKTWTPADYASAAGRKLGGAAPNAMDFMSRLDSNVSSIDFNCCTDSKSGSSGLVKIHKRERSSPTAPESTSQVSKKRYKLVENIKVEPSSSQAKVAPEDRAAFLRELRSLVTQDQFRRFGKALLEYKNGTYESFQALMAILLDVLSAPKVRYMLVGMRKYLKNEHKEEFDRRVGNL.

The 278-residue stretch at 7–284 (AGIPVHFPFE…QDMAGDEPKD (278 aa)) folds into the Helicase ATP-binding domain. An ATP-binding site is contributed by 42–49 (SPTGTGKT). Cys146, Cys164, Cys173, and Cys209 together coordinate [4Fe-4S] cluster. The short motif at 233 to 236 (DEAH) is the DEAH box element. Residues 844-864 (VKIHKRERSSPTAPESTSQVS) form a disordered region. Over residues 853–863 (SPTAPESTSQV) the composition is skewed to polar residues. A Phosphothreonine modification is found at Thr855.

Belongs to the helicase family. RAD3/XPD subfamily.

Its subcellular location is the nucleus. The enzyme catalyses ATP + H2O = ADP + phosphate + H(+). In terms of biological role, a probable ATP-dependent DNA helicase implicated in DNA repair and the maintenance of genomic stability. Acts as an anti-recombinase to counteract toxic recombination and limit crossover during meiosis. Regulates meiotic recombination and crossover homeostasis by physically dissociating strand invasion events and thereby promotes noncrossover repair by meiotic synthesis dependent strand annealing (SDSA) as well as disassembly of D loop recombination intermediates. The chain is Regulator of telomere elongation helicase 1 homolog from Drosophila sechellia (Fruit fly).